Consider the following 1516-residue polypeptide: Mediator of RNA polymerase II transcription subunit 14 (1516 aa).

2 disordered regions span residues 22–98 (LSSQ…EVPA) and 1434–1516 (MHRQ…YPPQ). A compositionally biased stretch (low complexity) spans 34–47 (SPAAPISPAPSGSA). Over residues 72-83 (SEVDVKSIHSSD) the composition is skewed to basic and acidic residues. Over residues 1463–1473 (SHQQHMMNPGS) the composition is skewed to low complexity. Gly residues predominate over residues 1474–1483 (VGPGSVGGPG). Over residues 1502–1516 (QSYHHPLHHQQYPPQ) the composition is skewed to low complexity.

Belongs to the Mediator complex subunit 14 family. In terms of assembly, component of the Mediator complex.

Its subcellular location is the nucleus. Functionally, component of the Mediator complex, a coactivator involved in the regulated transcription of nearly all RNA polymerase II-dependent genes. Mediator functions as a bridge to convey information from gene-specific regulatory proteins to the basal RNA polymerase II transcription machinery. Mediator is recruited to promoters by direct interactions with regulatory proteins and serves as a scaffold for the assembly of a functional preinitiation complex with RNA polymerase II and the general transcription factors. Required for transcription in the embryo and for phosphorylation of the RNA polymerase II C-terminal domain repeat. The protein is Mediator of RNA polymerase II transcription subunit 14 (rgr-1) of Caenorhabditis elegans.